The primary structure comprises 164 residues: MRVRGRAWKYGDNIDTDVIIPARYLNTSDPKELAKHVLEDLDPEFRSKMKPGDIIVAGENFGCGSSREHAPLAIKAAGVSCVIAKSFARIFYRNAINIGLPILEAPQAVDRIETGDELEVDFSSGEIRNLTKGEVYRANPFPDFIMEIIKAGGLVEWAKRRLKG.

This sequence belongs to the LeuD family. LeuD type 2 subfamily. Heterodimer of LeuC and LeuD.

The enzyme catalyses (2R,3S)-3-isopropylmalate = (2S)-2-isopropylmalate. It participates in amino-acid biosynthesis; L-leucine biosynthesis; L-leucine from 3-methyl-2-oxobutanoate: step 2/4. Its function is as follows. Catalyzes the isomerization between 2-isopropylmalate and 3-isopropylmalate, via the formation of 2-isopropylmaleate. This is 3-isopropylmalate dehydratase small subunit 1 (leuD1) from Pyrococcus abyssi (strain GE5 / Orsay).